We begin with the raw amino-acid sequence, 421 residues long: D-amino-acid oxidase (421 aa).

13 residues coordinate FAD: Ala12, Gly13, Ala14, Val15, Gly47, Gly64, Ile65, Lys225, Ala226, Arg359, Gly385, Gly388, and Leu389. Arg359 contributes to the D-proline binding site. Position 359 (Arg359) interacts with D-serine.

This sequence belongs to the DAMOX/DASOX family. It depends on FAD as a cofactor.

The protein resides in the cytoplasm. It localises to the secreted. The protein localises to the cell wall. It catalyses the reaction a D-alpha-amino acid + O2 + H2O = a 2-oxocarboxylate + H2O2 + NH4(+). Functionally, catalyzes the oxidative deamination of D-amino acids with broad substrate specificity. This is D-amino-acid oxidase from Bradyrhizobium diazoefficiens (strain JCM 10833 / BCRC 13528 / IAM 13628 / NBRC 14792 / USDA 110).